Consider the following 560-residue polypeptide: Membrane protein insertase YidC (560 aa).

Residues 1–21 (MDIKRTILIAALAVVSYVMVL) traverse the membrane as a helical segment. The disordered stretch occupies residues 42–66 (VAPGLPDGVPAGNNGASADVPSANA). The next 5 helical transmembrane spans lie at 341 to 361 (LELT…FWLL), 367 to 387 (LLGN…GLFF), 437 to 457 (LGGC…YWVL), 468 to 488 (WILW…PIIM), and 515 to 535 (PIIF…YWVV).

It belongs to the OXA1/ALB3/YidC family. Type 1 subfamily. Interacts with the Sec translocase complex via SecD. Specifically interacts with transmembrane segments of nascent integral membrane proteins during membrane integration.

The protein localises to the cell inner membrane. Its function is as follows. Required for the insertion and/or proper folding and/or complex formation of integral membrane proteins into the membrane. Involved in integration of membrane proteins that insert both dependently and independently of the Sec translocase complex, as well as at least some lipoproteins. Aids folding of multispanning membrane proteins. This Pseudomonas putida (strain ATCC 47054 / DSM 6125 / CFBP 8728 / NCIMB 11950 / KT2440) protein is Membrane protein insertase YidC.